A 311-amino-acid chain; its full sequence is ATP synthase subunit a (311 aa).

The next 6 helical transmembrane spans lie at 62-82 (AVHVDTLGWGIFLALVVGFFM), 123-143 (VAPMAITVFSWVFMMNLMDLI), 179-199 (VTVFILMLFFSVQQKGLWGFI), 213-233 (FWYFNLILIPFNFILETVALI), 253-273 (IFILIATLFSVGLLFGFLGGI), and 276-296 (FGWAVLHILVILIQAFVFMVL).

Belongs to the ATPase A chain family. In terms of assembly, F-type ATPases have 2 components, CF(1) - the catalytic core - and CF(0) - the membrane proton channel. CF(1) has five subunits: alpha(3), beta(3), gamma(1), delta(1), epsilon(1). CF(0) has three main subunits: a(1), b(2) and c(9-12). The alpha and beta chains form an alternating ring which encloses part of the gamma chain. CF(1) is attached to CF(0) by a central stalk formed by the gamma and epsilon chains, while a peripheral stalk is formed by the delta and b chains.

The protein localises to the cell inner membrane. Key component of the proton channel; it plays a direct role in the translocation of protons across the membrane. The polypeptide is ATP synthase subunit a (Teredinibacter turnerae (strain ATCC 39867 / T7901)).